The following is a 306-amino-acid chain: Mitochondrial glycine transporter (306 aa).

Solcar repeat units lie at residues 25 to 114 (QPVI…LKQY), 121 to 205 (PTAL…TKNV), and 217 to 301 (LVPV…MMAK). The next 6 helical transmembrane spans lie at 31–56 (FLCG…TRLQ), 89–115 (GMSP…KQYF), 127–152 (VILG…TRYE), 180–203 (GLTA…SQTK), 221–247 (VNFS…KTHM), and 276–294 (GSVP…AWTV).

The protein belongs to the mitochondrial carrier (TC 2.A.29) family. SLC25A38 subfamily.

The protein localises to the mitochondrion inner membrane. It catalyses the reaction glycine(in) = glycine(out). Mitochondrial glycine transporter that imports glycine into the mitochondrial matrix. Plays an important role in providing glycine for the first enzymatic step in heme biosynthesis, the condensation of glycine with succinyl-CoA to produce 5-aminolevulinate (ALA) in the mitochondrial matrix. Required during erythropoiesis. Its function is as follows. Plays a role as pro-apoptotic protein that induces caspase-dependent apoptosis. The sequence is that of Mitochondrial glycine transporter from Ovis aries (Sheep).